The following is a 157-amino-acid chain: Arginine repressor (157 aa).

It belongs to the ArgR family.

It is found in the cytoplasm. Its pathway is amino-acid biosynthesis; L-arginine biosynthesis [regulation]. Functionally, regulates arginine biosynthesis genes. In Bacteroides fragilis (strain YCH46), this protein is Arginine repressor.